Reading from the N-terminus, the 185-residue chain is TATA-box-binding protein 2 (185 aa).

2 consecutive repeat copies span residues 7-84 (IENI…ANEL) and 100-178 (VQNV…KTQL).

It belongs to the TBP family.

Its function is as follows. General factor that plays a role in the activation of archaeal genes transcribed by RNA polymerase. Binds specifically to the TATA box promoter element which lies close to the position of transcription initiation. The protein is TATA-box-binding protein 2 of Methanosarcina acetivorans (strain ATCC 35395 / DSM 2834 / JCM 12185 / C2A).